Reading from the N-terminus, the 182-residue chain is Oligoribonuclease (182 aa).

The 164-residue stretch at 7 to 170 (LIWIDLEMTG…EDIRESVEEL (164 aa)) folds into the Exonuclease domain. Tyr128 is an active-site residue.

The protein belongs to the oligoribonuclease family.

It localises to the cytoplasm. 3'-to-5' exoribonuclease specific for small oligoribonucleotides. This Hahella chejuensis (strain KCTC 2396) protein is Oligoribonuclease.